Consider the following 373-residue polypeptide: Probable leucine aminopeptidase 1 (373 aa).

An N-terminal signal peptide occupies residues 1 to 18 (MKLLSVLALSATATSVLG). Zn(2+) is bound by residues H176 and D195. An N-linked (GlcNAc...) asparagine glycan is attached at N196. Zn(2+) is bound by residues E234 and D261. N-linked (GlcNAc...) asparagine glycosylation is present at N288. C310 and C314 form a disulfide bridge. H343 is a binding site for Zn(2+).

Belongs to the peptidase M28 family. M28E subfamily. As to quaternary structure, monomer. The cofactor is Zn(2+).

Its subcellular location is the secreted. Its function is as follows. Extracellular aminopeptidase which contributes to pathogenicity. The protein is Probable leucine aminopeptidase 1 (LAP1) of Trichophyton verrucosum (strain HKI 0517).